A 56-amino-acid polypeptide reads, in one-letter code: UPF0391 membrane protein Rru_A0119 (56 aa).

Helical transmembrane passes span 4-24 and 30-50; these read WALI…GGIA and IAQI…IMHF.

Belongs to the UPF0391 family.

The protein localises to the cell membrane. The chain is UPF0391 membrane protein Rru_A0119 from Rhodospirillum rubrum (strain ATCC 11170 / ATH 1.1.1 / DSM 467 / LMG 4362 / NCIMB 8255 / S1).